Reading from the N-terminus, the 194-residue chain is MRPPLILASSSPYRRELLERLRLPFEIVVPAIDETPAPGESPDQTALRLARQKAEKVAAAHAGALVIGSDQVATLDGKQVGKPGDHARALAQLHWMRGRTVTFHSALCLYDGRTGQHQSEDVRTLATFRSLSDEELDAYLHLEHPYDVAGSAKSEGLGIALLERVESPDPTALVGLPLIALTTMLRNVHYPLFA.

Asp-70 serves as the catalytic Proton acceptor.

Belongs to the Maf family. YceF subfamily. It depends on a divalent metal cation as a cofactor.

The protein resides in the cytoplasm. The catalysed reaction is N(7)-methyl-GTP + H2O = N(7)-methyl-GMP + diphosphate + H(+). In terms of biological role, nucleoside triphosphate pyrophosphatase that hydrolyzes 7-methyl-GTP (m(7)GTP). May have a dual role in cell division arrest and in preventing the incorporation of modified nucleotides into cellular nucleic acids. The polypeptide is 7-methyl-GTP pyrophosphatase (Ralstonia nicotianae (strain ATCC BAA-1114 / GMI1000) (Ralstonia solanacearum)).